Here is a 449-residue protein sequence, read N- to C-terminus: UNC93-like protein MFSD11 (449 aa).

A helical membrane pass occupies residues 8 to 28 (LFNIIILGVAFMFMFTAFQTC). Asn40 carries an N-linked (GlcNAc...) asparagine glycan. The next 5 membrane-spanning stretches (helical) occupy residues 53–73 (AIIY…VAIV), 74–94 (GPQL…AVFI), 96–116 (PFPW…AVLW), 138–158 (IFWA…YFAW), and 170–190 (RTVF…FFLI). Ser204 carries the phosphoserine modification. 6 helical membrane passes run 239–259 (MLLL…FSGV), 277–297 (LIGL…SLFG), 309–329 (PVVL…FLNM), 359–379 (FLLG…LGFL), 385–405 (APAF…AFFY), and 410–430 (LLHW…ISFF).

Belongs to the unc-93 family.

The protein localises to the membrane. In Homo sapiens (Human), this protein is UNC93-like protein MFSD11 (MFSD11).